The sequence spans 352 residues: Molybdenum import ATP-binding protein ModC (352 aa).

The region spanning Met1–Glu229 is the ABC transporter domain. Residue Gly31 to Thr38 coordinates ATP. A Mop domain is found at Gln289 to Ala352.

It belongs to the ABC transporter superfamily. Molybdate importer (TC 3.A.1.8) family. In terms of assembly, the complex is composed of two ATP-binding proteins (ModC), two transmembrane proteins (ModB) and a solute-binding protein (ModA).

Its subcellular location is the cell inner membrane. The enzyme catalyses molybdate(out) + ATP + H2O = molybdate(in) + ADP + phosphate + H(+). In terms of biological role, part of the ABC transporter complex ModABC involved in molybdenum import. Responsible for energy coupling to the transport system. The chain is Molybdenum import ATP-binding protein ModC from Shigella boydii serotype 4 (strain Sb227).